The sequence spans 190 residues: Surfactant protein C (190 aa).

The propeptide occupies 1 to 23 (MDVGSKEVLIENPPDYSAAPQGR). The S-palmitoyl cysteine moiety is linked to residue C28. The propeptide occupies 59 to 190 (HMSQKHTEMV…LCGEVPLYYI (132 aa)). Positions 94 to 190 (FSIGSTGIVV…LCGEVPLYYI (97 aa)) constitute a BRICHOS domain. A disulfide bond links C121 and C182.

The protein localises to the secreted. The protein resides in the extracellular space. It is found in the surface film. Pulmonary surfactant associated proteins promote alveolar stability by lowering the surface tension at the air-liquid interface in the peripheral air spaces. The protein is Surfactant protein C (SFTPC) of Neovison vison (American mink).